The sequence spans 326 residues: Transcription factor WRKY45-1 (326 aa).

Disordered stretches follow at residues 67 to 114 (GGEG…SVVV) and 252 to 288 (GVGS…FGPD). Residues 112 to 180 (VVVKNLDDGQ…YIGEHTCRDP (69 aa)) constitute a DNA-binding region (WRKY). Over residues 273–283 (RGGGGGGGVAG) the composition is skewed to gly residues.

Belongs to the WRKY group III family. As to expression, expressed in aleurone cells.

It is found in the nucleus. In terms of biological role, transcriptional activator involved in defense responses against pathogens. Acts as a positive regulator of defense responses against the rice blast fungus Magnaporthe oryzae. Acts through W-boxes, which are cis-elements that are enriched in the promoters of several defense-related genes. Plays an important role in the benzothiadiazole-induced disease resistance by mediating salicylic acid (SA) defense signaling pathway, independently of the disease resistance gene NPR1/NH1. Acts as a negative regulator of defense responses against the bacterial blight Xanthomonas oryzae pv oryzae (Xoo) and the bacterial streak Xanthomonas oryzae pv oryzicola (Xoc). Acts downstream of abscisic acid (ABA) signaling in response to the rice blast fungus. ABA is a negative regulator of defense responses that interacts antagonistically with salicylic acid (SA) signaling pathway. Acts as a negative regulator of ABA signaling that suppresses growth of seedlings. Does not seem to be involved in the regulation of salt stress response. Acts as a negative regulator of cold stress response. Acts as a negative regulator of drought stress response. The sequence is that of Transcription factor WRKY45-1 from Oryza sativa subsp. japonica (Rice).